The sequence spans 223 residues: GTP cyclohydrolase 1 (223 aa).

The Zn(2+) site is built by Cys114, His117, and Cys185.

This sequence belongs to the GTP cyclohydrolase I family. As to quaternary structure, homomer.

It carries out the reaction GTP + H2O = 7,8-dihydroneopterin 3'-triphosphate + formate + H(+). The protein operates within cofactor biosynthesis; 7,8-dihydroneopterin triphosphate biosynthesis; 7,8-dihydroneopterin triphosphate from GTP: step 1/1. The protein is GTP cyclohydrolase 1 of Chlorobium chlorochromatii (strain CaD3).